The sequence spans 263 residues: Proline rich transmembrane protein 1B (263 aa).

Positions 1–17 are enriched in gly residues; that stretch reads MEAGAGGAGSDTKGGGS. The tract at residues 1–107 is disordered; sequence MEAGAGGAGS…IGFVGEPPPY (107 aa). Composition is skewed to low complexity over residues 37–47 and 75–86; these read QMPAQPALPQL and DAPAQAAGEAGP. The next 2 helical transmembrane spans lie at 190-210 and 238-258; these read MMES…IAIV and VLFS…YVVV.

It belongs to the CD225/Dispanin family.

Its subcellular location is the membrane. The chain is Proline rich transmembrane protein 1B from Homo sapiens (Human).